A 425-amino-acid polypeptide reads, in one-letter code: Monoacylglycerol lipase ABHD2 (425 aa).

The Cytoplasmic segment spans residues 1-9; sequence MNAMLETPE. A helical; Signal-anchor for type II membrane protein membrane pass occupies residues 10–30; that stretch reads LPAVFDGVKLAAVAAVLYVIV. Over 31-425 the chain is Extracellular; it reads RCLNLKSPTA…DTEQVEADLE (395 aa). An AB hydrolase-1 domain is found at 128-382; it reads MVICPGIANH…HGGHLGFFEG (255 aa). Asparagine 136 is a glycosylation site (N-linked (GlcNAc...) asparagine). Serine 207 functions as the Nucleophile in the catalytic mechanism. Active-site charge relay system residues include aspartate 345 and histidine 376. A glycan (N-linked (GlcNAc...) asparagine) is linked at asparagine 410.

This sequence belongs to the AB hydrolase superfamily. AB hydrolase 4 family.

Its subcellular location is the cell membrane. The catalysed reaction is Hydrolyzes glycerol monoesters of long-chain fatty acids.. The enzyme catalyses an acetyl ester + H2O = an aliphatic alcohol + acetate + H(+). It catalyses the reaction a triacylglycerol + H2O = a diacylglycerol + a fatty acid + H(+). It carries out the reaction 2-(5Z,8Z,11Z,14Z-eicosatetraenoyl)-glycerol + H2O = glycerol + (5Z,8Z,11Z,14Z)-eicosatetraenoate + H(+). The catalysed reaction is a butanoate ester + H2O = an aliphatic alcohol + butanoate + H(+). The enzyme catalyses hexadecanoate ester + H2O = an aliphatic alcohol + hexadecanoate + H(+). With respect to regulation, acylglycerol lipase activity is activated upon binding to progesterone. In terms of biological role, progesterone-dependent acylglycerol lipase that catalyzes hydrolysis of endocannabinoid arachidonoylglycerol (AG) from cell membrane. Acts as a progesterone receptor: progesterone-binding activates the acylglycerol lipase activity, mediating degradation of 1-arachidonoylglycerol (1AG) and 2-arachidonoylglycerol (2AG) to glycerol and arachidonic acid (AA). Also displays an ester hydrolase activity against acetyl ester, butanoate ester and hexadecanoate ester. Plays a key role in sperm capacitation in response to progesterone by mediating degradation of 2AG, an inhibitor of the sperm calcium channel CatSper, leading to calcium influx via CatSper and sperm activation. May also play a role in smooth muscle cells migration. The chain is Monoacylglycerol lipase ABHD2 (ABHD2) from Macaca fascicularis (Crab-eating macaque).